The following is a 133-amino-acid chain: uncharacterized protein (133 aa).

This is an uncharacterized protein from Saccharomyces cerevisiae (strain ATCC 204508 / S288c) (Baker's yeast).